We begin with the raw amino-acid sequence, 317 residues long: Homoserine kinase (317 aa).

ATP is bound at residue 95–105 (PHSRGLGSSAA).

Belongs to the GHMP kinase family. Homoserine kinase subfamily.

It localises to the cytoplasm. It catalyses the reaction L-homoserine + ATP = O-phospho-L-homoserine + ADP + H(+). It functions in the pathway amino-acid biosynthesis; L-threonine biosynthesis; L-threonine from L-aspartate: step 4/5. Its function is as follows. Catalyzes the ATP-dependent phosphorylation of L-homoserine to L-homoserine phosphate. The chain is Homoserine kinase from Mycolicibacterium smegmatis (strain ATCC 700084 / mc(2)155) (Mycobacterium smegmatis).